Here is a 347-residue protein sequence, read N- to C-terminus: S-adenosylmethionine:tRNA ribosyltransferase-isomerase (347 aa).

This sequence belongs to the QueA family. Monomer.

It localises to the cytoplasm. The catalysed reaction is 7-aminomethyl-7-carbaguanosine(34) in tRNA + S-adenosyl-L-methionine = epoxyqueuosine(34) in tRNA + adenine + L-methionine + 2 H(+). It functions in the pathway tRNA modification; tRNA-queuosine biosynthesis. In terms of biological role, transfers and isomerizes the ribose moiety from AdoMet to the 7-aminomethyl group of 7-deazaguanine (preQ1-tRNA) to give epoxyqueuosine (oQ-tRNA). This is S-adenosylmethionine:tRNA ribosyltransferase-isomerase from Xylella fastidiosa (strain 9a5c).